The following is a 495-amino-acid chain: ATP synthase subunit beta, chloroplastic (495 aa).

172–179 (GGAGVGKT) is a binding site for ATP.

This sequence belongs to the ATPase alpha/beta chains family. As to quaternary structure, F-type ATPases have 2 components, CF(1) - the catalytic core - and CF(0) - the membrane proton channel. CF(1) has five subunits: alpha(3), beta(3), gamma(1), delta(1), epsilon(1). CF(0) has four main subunits: a(1), b(1), b'(1) and c(9-12).

The protein resides in the plastid. It localises to the chloroplast thylakoid membrane. It catalyses the reaction ATP + H2O + 4 H(+)(in) = ADP + phosphate + 5 H(+)(out). Its function is as follows. Produces ATP from ADP in the presence of a proton gradient across the membrane. The catalytic sites are hosted primarily by the beta subunits. The chain is ATP synthase subunit beta, chloroplastic from Hyacinthus orientalis (Common hyacinth).